A 301-amino-acid polypeptide reads, in one-letter code: 2-phosphoglycerate kinase (301 aa).

The ATP-cone domain occupies 2–89 (IRVIEKGDKV…FWRRFRKMKV (88 aa)).

It belongs to the 2-phosphoglycerate kinase family. Requires a divalent metal cation as cofactor.

It catalyses the reaction (2R)-2-phosphoglycerate + ATP = (2R)-2,3-bisphosphoglycerate + ADP + H(+). It functions in the pathway thermoadapter biosynthesis; cyclic 2,3-diphosphoglycerate biosynthesis; cyclic 2,3-diphosphoglycerate from 2-phospho-D-glycerate: step 1/2. Its function is as follows. Catalyzes the phosphorylation of 2-phosphoglycerate to 2,3-diphosphoglycerate. Involved in the biosynthesis of cyclic 2,3-bisphosphoglycerate, a thermoprotectant. The chain is 2-phosphoglycerate kinase from Pyrococcus horikoshii (strain ATCC 700860 / DSM 12428 / JCM 9974 / NBRC 100139 / OT-3).